The following is a 306-amino-acid chain: Ribonuclease Z (306 aa).

Residues histidine 63, histidine 65, aspartate 67, histidine 68, histidine 140, aspartate 211, and histidine 269 each coordinate Zn(2+). Aspartate 67 serves as the catalytic Proton acceptor.

Belongs to the RNase Z family. Homodimer. Zn(2+) serves as cofactor.

The enzyme catalyses Endonucleolytic cleavage of RNA, removing extra 3' nucleotides from tRNA precursor, generating 3' termini of tRNAs. A 3'-hydroxy group is left at the tRNA terminus and a 5'-phosphoryl group is left at the trailer molecule.. Functionally, zinc phosphodiesterase, which displays some tRNA 3'-processing endonuclease activity. Probably involved in tRNA maturation, by removing a 3'-trailer from precursor tRNA. This is Ribonuclease Z from Listeria monocytogenes serotype 4a (strain HCC23).